Consider the following 61-residue polypeptide: Small ribosomal subunit protein uS14 (61 aa).

Residues C24, C27, C40, and C43 each coordinate Zn(2+).

Belongs to the universal ribosomal protein uS14 family. Zinc-binding uS14 subfamily. Part of the 30S ribosomal subunit. Contacts proteins S3 and S10. Zn(2+) serves as cofactor.

Binds 16S rRNA, required for the assembly of 30S particles and may also be responsible for determining the conformation of the 16S rRNA at the A site. This is Small ribosomal subunit protein uS14 from Geobacillus stearothermophilus (Bacillus stearothermophilus).